Consider the following 457-residue polypeptide: Tubulin gamma-2 chain (457 aa).

GTP is bound at residue Ala142–Gly148.

This sequence belongs to the tubulin family. As to quaternary structure, interacts with Ote. Expressed in nurse cells and oocytes of developing egg chambers.

Its subcellular location is the cytoplasm. The protein resides in the cytoskeleton. The protein localises to the microtubule organizing center. It localises to the centrosome. It is found in the spindle. Functionally, tubulin is the major constituent of microtubules. The gamma chain is found at microtubule organizing centers (MTOC) such as the spindle poles or the centrosome, suggesting that it is involved in the minus-end nucleation of microtubule assembly. Required for oocyte activation and consequently for organization of the female meiotic spindle. Essential for centrosome organization and assembly of biastral mitotic spindles in embryos. Plays a role in stabilizing the augmin complex on the meiotic spindle. The sequence is that of Tubulin gamma-2 chain (gammaTub37C) from Drosophila melanogaster (Fruit fly).